The following is a 138-amino-acid chain: Large ribosomal subunit protein uL16 (138 aa).

Positions 1 to 22 (MQQPARTKYRKQQKGRNKGIAT) are disordered. Residues 7–17 (TKYRKQQKGRN) are compositionally biased toward basic residues.

The protein belongs to the universal ribosomal protein uL16 family. As to quaternary structure, part of the 50S ribosomal subunit.

Functionally, binds 23S rRNA and is also seen to make contacts with the A and possibly P site tRNAs. The sequence is that of Large ribosomal subunit protein uL16 from Nitrosospira multiformis (strain ATCC 25196 / NCIMB 11849 / C 71).